The following is an 84-amino-acid chain: M-myrmeciitoxin-Mb2a (84 aa).

A signal peptide spans Met1–Ala21. Residues Pro22 to Pro48 constitute a propeptide that is removed on maturation.

Belongs to the formicidae venom precursor-01 superfamily. Ant pilosulin family. Expressed by the venom gland.

It is found in the secreted. Its function is as follows. Shows activity against E.coli and S.aureus (MIC&lt;6.25 uM), moderate activity against P.aeruginosa (MIC&lt;25 uM), weak activity against B.subtilis (MIC&lt;50 uM), and has no effect against L.garvieae, C.albicans, and S.cerevisiae. Has no hemolytic nor cytolytic activity. Causes an IgE-independent histamine release. This chain is M-myrmeciitoxin-Mb2a, found in Myrmecia banksi (Jack jumper ant).